Reading from the N-terminus, the 333-residue chain is MIERIWSGRSRLYWLLLPLSWLYGFITFLIRQSYRLGWRKSWRAPVPVVVVGNLTAGGNGKTPVVIWLVEHLQRRGYRVGVVSRGYGGKAERYPLLLDDTVTTAQAGDEPVLIFQRTGAPVAVAPRRRDAVSALLAQHTLDVVITDDGLQHYALERDIELVVIDGMRRFGNGWWLPAGPMRERESRLTSVDAVIVNGGTPRTNEIGMTLTAGMAVNLLSGESRPLSQLHDVVAMAGIGHPPRFFATLREAGVSIAREIAFADHQSYQPEQLESLTQDATQPLLMTEKDAVKCKTFAQRNWWYLPVDAMLAEPRATQLLDKLESVIKRHTSNRT.

55-62 (TAGGNGKT) contributes to the ATP binding site.

The protein belongs to the LpxK family.

The enzyme catalyses a lipid A disaccharide + ATP = a lipid IVA + ADP + H(+). The protein operates within glycolipid biosynthesis; lipid IV(A) biosynthesis; lipid IV(A) from (3R)-3-hydroxytetradecanoyl-[acyl-carrier-protein] and UDP-N-acetyl-alpha-D-glucosamine: step 6/6. In terms of biological role, transfers the gamma-phosphate of ATP to the 4'-position of a tetraacyldisaccharide 1-phosphate intermediate (termed DS-1-P) to form tetraacyldisaccharide 1,4'-bis-phosphate (lipid IVA). This is Tetraacyldisaccharide 4'-kinase from Pectobacterium carotovorum subsp. carotovorum (strain PC1).